A 104-amino-acid chain; its full sequence is Large ribosomal subunit protein bL21 (104 aa).

This sequence belongs to the bacterial ribosomal protein bL21 family. Part of the 50S ribosomal subunit. Contacts protein L20.

In terms of biological role, this protein binds to 23S rRNA in the presence of protein L20. This chain is Large ribosomal subunit protein bL21, found in Opitutus terrae (strain DSM 11246 / JCM 15787 / PB90-1).